Consider the following 146-residue polypeptide: D-aminoacyl-tRNA deacylase (146 aa).

Residues 138-139 carry the Gly-cisPro motif, important for rejection of L-amino acids motif; it reads GP.

It belongs to the DTD family. As to quaternary structure, homodimer.

It localises to the cytoplasm. It carries out the reaction glycyl-tRNA(Ala) + H2O = tRNA(Ala) + glycine + H(+). It catalyses the reaction a D-aminoacyl-tRNA + H2O = a tRNA + a D-alpha-amino acid + H(+). Functionally, an aminoacyl-tRNA editing enzyme that deacylates mischarged D-aminoacyl-tRNAs. Also deacylates mischarged glycyl-tRNA(Ala), protecting cells against glycine mischarging by AlaRS. Acts via tRNA-based rather than protein-based catalysis; rejects L-amino acids rather than detecting D-amino acids in the active site. By recycling D-aminoacyl-tRNA to D-amino acids and free tRNA molecules, this enzyme counteracts the toxicity associated with the formation of D-aminoacyl-tRNA entities in vivo and helps enforce protein L-homochirality. In Stenotrophomonas maltophilia (strain R551-3), this protein is D-aminoacyl-tRNA deacylase.